The primary structure comprises 339 residues: Dihydroorotate dehydrogenase (quinone) (339 aa).

FMN-binding positions include Ala-62–Lys-66 and Thr-86. Residue Lys-66 participates in substrate binding. A substrate-binding site is contributed by Asn-111–Phe-115. Positions 139 and 172 each coordinate FMN. Asn-172 provides a ligand contact to substrate. Residue Ser-175 is the Nucleophile of the active site. A substrate-binding site is contributed by Asn-177. FMN-binding residues include Lys-217 and Thr-245. Asn-246 to Thr-247 is a substrate binding site. Residues Gly-268, Gly-297, and Tyr-318 to Ser-319 each bind FMN.

The protein belongs to the dihydroorotate dehydrogenase family. Type 2 subfamily. In terms of assembly, monomer. Requires FMN as cofactor.

The protein localises to the cell membrane. The enzyme catalyses (S)-dihydroorotate + a quinone = orotate + a quinol. Its pathway is pyrimidine metabolism; UMP biosynthesis via de novo pathway; orotate from (S)-dihydroorotate (quinone route): step 1/1. Its function is as follows. Catalyzes the conversion of dihydroorotate to orotate with quinone as electron acceptor. In Shewanella baltica (strain OS223), this protein is Dihydroorotate dehydrogenase (quinone).